The primary structure comprises 244 residues: 7-cyano-7-deazaguanine synthase (244 aa).

Phenylalanine 19–leucine 29 contacts ATP. The Zn(2+) site is built by cysteine 207, cysteine 222, cysteine 225, and cysteine 228.

It belongs to the QueC family. Zn(2+) serves as cofactor.

The catalysed reaction is 7-carboxy-7-deazaguanine + NH4(+) + ATP = 7-cyano-7-deazaguanine + ADP + phosphate + H2O + H(+). It functions in the pathway purine metabolism; 7-cyano-7-deazaguanine biosynthesis. In terms of biological role, catalyzes the ATP-dependent conversion of 7-carboxy-7-deazaguanine (CDG) to 7-cyano-7-deazaguanine (preQ(0)). The sequence is that of 7-cyano-7-deazaguanine synthase from Bordetella avium (strain 197N).